Consider the following 79-residue polypeptide: Large ribosomal subunit protein bL31c (79 aa).

It belongs to the bacterial ribosomal protein bL31 family. Type A subfamily. As to quaternary structure, part of the 50S ribosomal subunit.

The protein localises to the plastid. It is found in the chloroplast. Binds the 23S rRNA. The protein is Large ribosomal subunit protein bL31c of Gracilaria tenuistipitata var. liui (Red alga).